Reading from the N-terminus, the 90-residue chain is Small ribosomal subunit protein uS17 (90 aa).

The protein belongs to the universal ribosomal protein uS17 family. As to quaternary structure, part of the 30S ribosomal subunit.

In terms of biological role, one of the primary rRNA binding proteins, it binds specifically to the 5'-end of 16S ribosomal RNA. The polypeptide is Small ribosomal subunit protein uS17 (Dehalococcoides mccartyi (strain ATCC BAA-2100 / JCM 16839 / KCTC 5957 / BAV1)).